Here is a 558-residue protein sequence, read N- to C-terminus: Glucose-6-phosphate isomerase (558 aa).

At A2 the chain carries N-acetylalanine. K12 is subject to N6-acetyllysine. S86 and S107 each carry phosphoserine. Residue K142 is modified to N6-acetyllysine. 159 to 160 (GS) contacts D-glucose 6-phosphate. Position 185 is a phosphoserine; by CK2 (S185). 210–215 (SKTFTT) is a D-glucose 6-phosphate binding site. At T250 the chain carries Phosphothreonine. D-glucose 6-phosphate-binding residues include Q354, E358, and H389. The Proton donor role is filled by E358. H389 is an active-site residue. At K454 the chain carries N6-acetyllysine; alternate. Position 454 is an N6-malonyllysine; alternate (K454). K454 is modified (N6-succinyllysine; alternate). S455 bears the Phosphoserine mark. K519 is a D-glucose 6-phosphate binding site. K519 is a catalytic residue.

This sequence belongs to the GPI family. Homodimer; in the catalytically active form. Monomer in the secreted form. Phosphorylation at Ser-185 by CK2 has been shown to decrease enzymatic activity and may contribute to secretion by a non-classical secretory pathway. In terms of processing, ISGylated.

It is found in the cytoplasm. The protein resides in the secreted. The catalysed reaction is alpha-D-glucose 6-phosphate = beta-D-fructose 6-phosphate. It functions in the pathway carbohydrate degradation; glycolysis; D-glyceraldehyde 3-phosphate and glycerone phosphate from D-glucose: step 2/4. Functionally, in the cytoplasm, catalyzes the conversion of glucose-6-phosphate to fructose-6-phosphate, the second step in glycolysis, and the reverse reaction during gluconeogenesis. Besides it's role as a glycolytic enzyme, also acts as a secreted cytokine: acts as an angiogenic factor (AMF) that stimulates endothelial cell motility. Acts as a neurotrophic factor, neuroleukin, for spinal and sensory neurons. It is secreted by lectin-stimulated T-cells and induces immunoglobulin secretion. The sequence is that of Glucose-6-phosphate isomerase from Rattus norvegicus (Rat).